The chain runs to 380 residues: ATPase ASNA1 homolog (380 aa).

Position 48-55 (48-55 (KGGVGKTT)) interacts with ATP. D77 is an active-site residue. ATP-binding residues include E248 and N275.

This sequence belongs to the arsA ATPase family. As to quaternary structure, homodimer.

Its subcellular location is the cytoplasm. The protein localises to the endoplasmic reticulum. ATPase required for the post-translational delivery of tail-anchored (TA) proteins to the endoplasmic reticulum. Recognizes and selectively binds the transmembrane domain of TA proteins in the cytosol. This complex then targets to the endoplasmic reticulum by membrane-bound receptors, where the tail-anchored protein is released for insertion. This process is regulated by ATP binding and hydrolysis. ATP binding drives the homodimer towards the closed dimer state, facilitating recognition of newly synthesized TA membrane proteins. ATP hydrolysis is required for insertion. Subsequently, the homodimer reverts towards the open dimer state, lowering its affinity for the membrane-bound receptor, and returning it to the cytosol to initiate a new round of targeting. This Plasmodium yoelii yoelii protein is ATPase ASNA1 homolog.